The following is a 106-amino-acid chain: Nucleoid-associated protein RPB_0667 (106 aa).

The protein belongs to the YbaB/EbfC family. In terms of assembly, homodimer.

The protein resides in the cytoplasm. The protein localises to the nucleoid. Its function is as follows. Binds to DNA and alters its conformation. May be involved in regulation of gene expression, nucleoid organization and DNA protection. This is Nucleoid-associated protein RPB_0667 from Rhodopseudomonas palustris (strain HaA2).